A 495-amino-acid polypeptide reads, in one-letter code: Pentatricopeptide repeat-containing protein PPR5 homolog, chloroplastic (495 aa).

The segment at 1–24 (MLAYPTTSSPWPPRHHGAAAAPAA) is disordered. The transit peptide at 1-29 (MLAYPTTSSPWPPRHHGAAAAPAARRHMA) directs the protein to the chloroplast. PPR repeat units lie at residues 120–154 (DNGI…GCRP), 155–189 (DTSV…MKTI), 195–229 (NIVT…PVSP), 230–264 (DIYT…QCRP), 265–299 (DVIT…KEKP), 300–334 (THPT…GFKP), 335–365 (NYVT…LVSS), 370–404 (HLSS…GAVP), and 405–439 (SAST…GIVP). A disordered region spans residues 455–495 (DKKPRTVPSKNSASKPDVESANNSGTDTSSKPNLSVWQVAA). Residues 462-495 (PSKNSASKPDVESANNSGTDTSSKPNLSVWQVAA) are compositionally biased toward polar residues.

The protein belongs to the PPR family. P subfamily.

It is found in the plastid. Its subcellular location is the chloroplast. In terms of biological role, involved in the biogenesis of the plastid translation machinery by promoting the splicing of group II introns in chloroplasts. This chain is Pentatricopeptide repeat-containing protein PPR5 homolog, chloroplastic, found in Oryza sativa subsp. japonica (Rice).